The sequence spans 474 residues: Variant surface glycoprotein MITAT 1.5 (474 aa).

The N-terminal stretch at 1–22 (MIHSNKVATVVLALISSWPADG) is a signal peptide. Intrachain disulfides connect Cys-37/Cys-161 and Cys-144/Cys-214. N-linked (GlcNAc...) asparagine glycosylation is found at Asn-74 and Asn-95. Residue Asn-329 is glycosylated (N-linked (GlcNAc...) asparagine). The segment at 388 to 449 (AKDGEGQKNQ…ETDEPDKEKC (62 aa)) is disordered. 2 stretches are compositionally biased toward basic and acidic residues: residues 414–423 (TNKEACEKEN) and 435–449 (KGKD…KEKC). Asn-451 carries the GPI-anchor amidated asparagine lipid modification. The propeptide at 452–474 (GSFLTSKQFAFSVVSAAFMALLF) is removed in mature form.

It localises to the cell membrane. In terms of biological role, VSG forms a coat on the surface of the parasite. The trypanosome evades the immune response of the host by expressing a series of antigenically distinct VSGs from an estimated 1000 VSG genes. The protein is Variant surface glycoprotein MITAT 1.5 of Trypanosoma brucei brucei.